The following is a 648-amino-acid chain: Interferon-induced GTP-binding protein Mx1 (648 aa).

At Met-1 the chain carries N-acetylmethionine. Residues 1 to 26 are disordered; sequence MVHSDLGIEELDSPESSLNGSEDMES. The region spanning 56–329 is the Dynamin-type G domain; that stretch reads DLALPAIAVI…LIMHICKTLP (274 aa). Residues 66-73 are G1 motif; the sequence is GDQSSGKS. 66–73 lines the GTP pocket; it reads GDQSSGKS. Residues 91–93 form a G2 motif region; that stretch reads VTR. The tract at residues 167–170 is G3 motif; that stretch reads DLPG. GTP contacts are provided by residues 167–171 and 236–239; these read DLPGI and TKPD. Residues 236–239 are G4 motif; that stretch reads TKPD. Residues 268–271 are G5 motif; that stretch reads KCRG. A bundle signaling element (BSE) region spans residues 330–355; that stretch reads LLENQIKETHQRITEELQKYGKDIPE. The interval 355-522 is middle domain; it reads EEESEKMFCL…HFQMEQLVYC (168 aa). The segment at 356–618 is stalk; that stretch reads EESEKMFCLI…KDQYDWLLKE (263 aa). The segment at 543 to 546 is critical for lipid-binding; it reads KNKK. The GED domain maps to 560–648; the sequence is TDEIFQHLTA…ARQRLAKFPG (89 aa).

Belongs to the TRAFAC class dynamin-like GTPase superfamily. Dynamin/Fzo/YdjA family. As to quaternary structure, homooligomer. Oligomerizes into multimeric filamentous or ring-like structures by virtue of its stalk domain. Oligomerization is critical for GTPase activity, protein stability, and recognition of viral target structures. Interacts with TRPC1, TRPC3, TRPC4, TRPC5, TRPC6 and TRPC7. Interacts with HSPA5. Interacts with TUBB/TUBB5. Interacts with DDX39A and DDX39B. Post-translationally, ISGylated. As to expression, ubiquitously expressed.

Its subcellular location is the cytoplasm. The protein localises to the endoplasmic reticulum membrane. It localises to the perinuclear region. The protein resides in the nucleus. Functionally, interferon-induced dynamin-like GTPase with antiviral activity against rabies virus (RABV), vesicular stomatitis virus (VSV) and murine pneumonia virus (MPV). Isoform 1 but not isoform 2 shows antiviral activity against vesicular stomatitis virus (VSV). This chain is Interferon-induced GTP-binding protein Mx1 (MX1), found in Bos taurus (Bovine).